Consider the following 172-residue polypeptide: NADH-quinone oxidoreductase subunit B (172 aa).

Residues C46, C47, C111, and C141 each contribute to the [4Fe-4S] cluster site.

It belongs to the complex I 20 kDa subunit family. As to quaternary structure, NDH-1 is composed of 14 different subunits. Subunits NuoB, C, D, E, F, and G constitute the peripheral sector of the complex. Requires [4Fe-4S] cluster as cofactor.

It localises to the cell membrane. It catalyses the reaction a quinone + NADH + 5 H(+)(in) = a quinol + NAD(+) + 4 H(+)(out). Its function is as follows. NDH-1 shuttles electrons from NADH, via FMN and iron-sulfur (Fe-S) centers, to quinones in the respiratory chain. The immediate electron acceptor for the enzyme in this species is believed to be a menaquinone. Couples the redox reaction to proton translocation (for every two electrons transferred, four hydrogen ions are translocated across the cytoplasmic membrane), and thus conserves the redox energy in a proton gradient. In Bacillus cereus (strain G9842), this protein is NADH-quinone oxidoreductase subunit B.